We begin with the raw amino-acid sequence, 954 residues long: Glycine dehydrogenase (decarboxylating) (954 aa).

K699 carries the post-translational modification N6-(pyridoxal phosphate)lysine.

This sequence belongs to the GcvP family. As to quaternary structure, the glycine cleavage system is composed of four proteins: P, T, L and H. The cofactor is pyridoxal 5'-phosphate.

The enzyme catalyses N(6)-[(R)-lipoyl]-L-lysyl-[glycine-cleavage complex H protein] + glycine + H(+) = N(6)-[(R)-S(8)-aminomethyldihydrolipoyl]-L-lysyl-[glycine-cleavage complex H protein] + CO2. Its function is as follows. The glycine cleavage system catalyzes the degradation of glycine. The P protein binds the alpha-amino group of glycine through its pyridoxal phosphate cofactor; CO(2) is released and the remaining methylamine moiety is then transferred to the lipoamide cofactor of the H protein. This Nitrobacter winogradskyi (strain ATCC 25391 / DSM 10237 / CIP 104748 / NCIMB 11846 / Nb-255) protein is Glycine dehydrogenase (decarboxylating).